A 177-amino-acid chain; its full sequence is Large ribosomal subunit protein uL16m (177 aa).

Belongs to the universal ribosomal protein uL16 family.

The protein resides in the mitochondrion. The polypeptide is Large ribosomal subunit protein uL16m (RPL16) (Brassica napus (Rape)).